A 108-amino-acid chain; its full sequence is Phosphoribosyl-AMP cyclohydrolase (108 aa).

Asp72 contributes to the Mg(2+) binding site. Residue Cys73 participates in Zn(2+) binding. Positions 74 and 76 each coordinate Mg(2+). Cys89 and Cys96 together coordinate Zn(2+).

Belongs to the PRA-CH family. Homodimer. Mg(2+) serves as cofactor. Zn(2+) is required as a cofactor.

It localises to the cytoplasm. It carries out the reaction 1-(5-phospho-beta-D-ribosyl)-5'-AMP + H2O = 1-(5-phospho-beta-D-ribosyl)-5-[(5-phospho-beta-D-ribosylamino)methylideneamino]imidazole-4-carboxamide. It participates in amino-acid biosynthesis; L-histidine biosynthesis; L-histidine from 5-phospho-alpha-D-ribose 1-diphosphate: step 3/9. Its function is as follows. Catalyzes the hydrolysis of the adenine ring of phosphoribosyl-AMP. This chain is Phosphoribosyl-AMP cyclohydrolase, found in Archaeoglobus fulgidus (strain ATCC 49558 / DSM 4304 / JCM 9628 / NBRC 100126 / VC-16).